A 98-amino-acid chain; its full sequence is Co-chaperonin GroES (98 aa).

This sequence belongs to the GroES chaperonin family. In terms of assembly, heptamer of 7 subunits arranged in a ring. Interacts with the chaperonin GroEL.

It localises to the cytoplasm. Functionally, together with the chaperonin GroEL, plays an essential role in assisting protein folding. The GroEL-GroES system forms a nano-cage that allows encapsulation of the non-native substrate proteins and provides a physical environment optimized to promote and accelerate protein folding. GroES binds to the apical surface of the GroEL ring, thereby capping the opening of the GroEL channel. This is Co-chaperonin GroES from Leifsonia xyli subsp. xyli (strain CTCB07).